Here is a 476-residue protein sequence, read N- to C-terminus: Membrane-bound lytic murein transglycosylase F (476 aa).

The N-terminal stretch at 1 to 22 (MTRFLFALILGFLLTACQQVTV) is a signal peptide. Positions 23–257 (DETEFVPKKL…HLNEKYFGHV (235 aa)) are non-LT domain. The segment at 258 to 476 (KRFDYVDTRA…AGTLSPEQPK (219 aa)) is LT domain. The active site involves Glu-302. Positions 446–476 (SKQQNPEEEPSDLASEEPAIPAGTLSPEQPK) are disordered. The span at 451–460 (PEEEPSDLAS) shows a compositional bias: acidic residues.

In the N-terminal section; belongs to the bacterial solute-binding protein 3 family. It in the C-terminal section; belongs to the transglycosylase Slt family.

The protein localises to the cell outer membrane. It carries out the reaction Exolytic cleavage of the (1-&gt;4)-beta-glycosidic linkage between N-acetylmuramic acid (MurNAc) and N-acetylglucosamine (GlcNAc) residues in peptidoglycan, from either the reducing or the non-reducing ends of the peptidoglycan chains, with concomitant formation of a 1,6-anhydrobond in the MurNAc residue.. Its function is as follows. Murein-degrading enzyme that degrades murein glycan strands and insoluble, high-molecular weight murein sacculi, with the concomitant formation of a 1,6-anhydromuramoyl product. Lytic transglycosylases (LTs) play an integral role in the metabolism of the peptidoglycan (PG) sacculus. Their lytic action creates space within the PG sacculus to allow for its expansion as well as for the insertion of various structures such as secretion systems and flagella. This chain is Membrane-bound lytic murein transglycosylase F, found in Shewanella baltica (strain OS155 / ATCC BAA-1091).